Reading from the N-terminus, the 330-residue chain is MTVRFGLLGAGRIGKVHAKAVSGNADARLVAVADAFPAAAEAIAGAYGCEVRTIDAIEAAADIDAVVICTPTDTHADLIERFARAGKAIFCEKPIDLDAERVRACLKVVSDTKAKLMVGFNRRFDPHFMAVRKAIDDGRIGEVEMVTITSRDPSAPPVDYIKRSGGIFRDMTIHDFDMARFLLGEEPVSVTATAAVLIDKAIGDAGDYDSVSVILQTASGKQAIISNSRRATYGYDQRIEVHGSKGAVAAENQRPVSIEIATGDGYTRPPLHDFFMTRYTEAYANEIESFIAAIEKGAEIAPSGNDGLAALALADAAVRSVAEKRQISIA.

The protein belongs to the Gfo/Idh/MocA family.

The catalysed reaction is myo-inositol + NAD(+) = scyllo-inosose + NADH + H(+). It functions in the pathway polyol metabolism; myo-inositol degradation into acetyl-CoA; acetyl-CoA from myo-inositol: step 1/7. Involved in the oxidation of myo-inositol (MI) to 2-keto-myo-inositol (2KMI or 2-inosose). This Rhizobium meliloti (strain 1021) (Ensifer meliloti) protein is Inositol 2-dehydrogenase (idhA).